The sequence spans 90 residues: DNA-binding protein HU (90 aa).

The tract at residues 57–90 (ARKGVNPQTRKPITIPERKVPKFKPGKALKEKVK) is disordered.

This sequence belongs to the bacterial histone-like protein family.

Histone-like DNA-binding protein which is capable of wrapping DNA to stabilize it, and thus to prevent its denaturation under extreme environmental conditions. This chain is DNA-binding protein HU (hup), found in Thermotoga maritima (strain ATCC 43589 / DSM 3109 / JCM 10099 / NBRC 100826 / MSB8).